We begin with the raw amino-acid sequence, 561 residues long: Asparagine synthetase [glutamine-hydrolyzing] (561 aa).

The active-site For GATase activity is Cys-2. The region spanning 2–191 (CGIWALFGSD…PGHYEVLDLK (190 aa)) is the Glutamine amidotransferase type-2 domain. L-glutamine-binding positions include 49–53 (RLAVV), 75–77 (NGE), and Asp-97. One can recognise an Asparagine synthetase domain in the interval 213 to 536 (HALYDSVEKL…PGRADWLTHY (324 aa)). Residues Leu-256, Ile-288, and 363–364 (SG) contribute to the ATP site. Position 385 is an N6-acetyllysine (Lys-385). Thr-545 bears the Phosphothreonine mark. The residue at position 557 (Ser-557) is a Phosphoserine.

It carries out the reaction L-aspartate + L-glutamine + ATP + H2O = L-asparagine + L-glutamate + AMP + diphosphate + H(+). It participates in amino-acid biosynthesis; L-asparagine biosynthesis; L-asparagine from L-aspartate (L-Gln route): step 1/1. This Mesocricetus auratus (Golden hamster) protein is Asparagine synthetase [glutamine-hydrolyzing] (ASNS).